The chain runs to 152 residues: Interleukin-1 family member 10 (152 aa).

The protein belongs to the IL-1 family. As to quaternary structure, interacts with cargo receptor TMED10; the interaction mediates the translocation from the cytoplasm into the ERGIC (endoplasmic reticulum-Golgi intermediate compartment) and thereby secretion. In terms of tissue distribution, expressed in fetal skin, spleen and tonsil. Expressed mostly in the basal epithelia of skin and in proliferating B-cells of the tonsil.

It is found in the cytoplasm. The protein resides in the secreted. Cytokine with immunomodulatory activity. Alone, does not induce cytokine production, but reduces IL22 and IL17A production by T-cells in response to heat-killed Candida albicans. Reduces IL36G-induced production of IL8 by peripheral blood mononuclear cells. Increases IL6 production by dendritic cells stimulated by bacterial lipopolysaccharides (LPS). Ligand for IL-36R/IL1RL2. The sequence is that of Interleukin-1 family member 10 from Homo sapiens (Human).